The following is a 274-amino-acid chain: N-acetylmuramic acid 6-phosphate etherase (274 aa).

Residues 52–215 (IVPRMEQGGR…STSIMIRLGR (164 aa)) enclose the SIS domain. The active-site Proton donor is glutamate 80. Glutamate 111 is a catalytic residue.

Belongs to the GCKR-like family. MurNAc-6-P etherase subfamily. As to quaternary structure, homodimer.

The enzyme catalyses N-acetyl-D-muramate 6-phosphate + H2O = N-acetyl-D-glucosamine 6-phosphate + (R)-lactate. Its pathway is amino-sugar metabolism; N-acetylmuramate degradation. Specifically catalyzes the cleavage of the D-lactyl ether substituent of MurNAc 6-phosphate, producing GlcNAc 6-phosphate and D-lactate. In Porphyromonas gingivalis (strain ATCC 33277 / DSM 20709 / CIP 103683 / JCM 12257 / NCTC 11834 / 2561), this protein is N-acetylmuramic acid 6-phosphate etherase.